Here is a 180-residue protein sequence, read N- to C-terminus: uncharacterized protein (180 aa).

The stretch at 114-147 (EDIYEDIVDVRLENQSLEEQLEDFKECSRALKKY) forms a coiled coil.

The protein belongs to the mimivirus L74/L77/R857 family.

This is an uncharacterized protein from Acanthamoeba polyphaga mimivirus (APMV).